The chain runs to 645 residues: MLGDRVRATRYFAYSGEVAIAALVVAVIGLMILPLPTPMIDTLLGINITLSVVLLMVTMYVPDSISLSSFPSLLLFTTLLRLSLNIASTKSILLHAEAGHIIESFGELVVGGNLVVGLVVFLIITTVQFIVIAKGSERVAEVGARFTLDAMPGKQMSIDADLRGGNLTADEARRKRARLAMESQLHGGMDGAMKFVKGDAIAGLVITMVNILAGIVVGVTYHGMTAGDAANRFAILSVGDAMVSQIASLLISVAAGVMITRVANENETRLSSLGLDIGRQLTSNARALMAASVLLACFAFVPGFPAVLFLLLAAAVGAGGYTIWRKQRDISGTDQRKLPSASRKGAKGEAPHIRKNAPDFASPLSMRLSPQLAALLDPARLDQAIESERRQLVELLGLPFPGIAIWQTESLQGMQYEVLIHDVPETRAELENTDDMQAALARQAISPLHARAHLFVGIQETQWMLEQVAVDYPGLVAEVNKAMPAQRIADVLRRLLEERIPVRNIKSILESLVVWGPKEKDLLMLTEYVRCDLGRYLAHTATAGTGQLPAVMLDHAVEQLIRQSIRATAAGNFLALPPEQANQLVEQVERIVGDHAQHPLAVVASMDVRRYVRRMIEARLTWLQVYSFQELGSEVQLQPIGRVVV.

A run of 7 helical transmembrane segments spans residues 18-34 (VAIA…MILP), 43-59 (LLGI…MVTM), 108-124 (LVVG…FLII), 201-217 (IAGL…GIVV), 243-259 (VSQI…GVMI), 285-301 (ARAL…FAFV), and 308-324 (LFLL…YTIW). Residues 334 to 354 (DQRKLPSASRKGAKGEAPHIR) form a disordered region.

This sequence belongs to the FHIPEP (flagella/HR/invasion proteins export pore) family.

It is found in the cell inner membrane. In terms of biological role, involved in the secretion of a proteinaceous elicitor of the hypersensitivity response in plants. This Xanthomonas euvesicatoria protein is Protein hrpC2 (hrpC2).